The primary structure comprises 310 residues: Ornithine carbamoyltransferase (310 aa).

Residues 56 to 59 (STRT), glutamine 83, arginine 107, and 134 to 137 (HPCQ) contribute to the carbamoyl phosphate site. Residues asparagine 165, aspartate 229, and 233–234 (SM) each bind L-ornithine. Carbamoyl phosphate-binding positions include 269–270 (CL) and arginine 297.

Belongs to the aspartate/ornithine carbamoyltransferase superfamily. OTCase family.

Its subcellular location is the cytoplasm. The enzyme catalyses carbamoyl phosphate + L-ornithine = L-citrulline + phosphate + H(+). It functions in the pathway amino-acid biosynthesis; L-arginine biosynthesis; L-arginine from L-ornithine and carbamoyl phosphate: step 1/3. Functionally, reversibly catalyzes the transfer of the carbamoyl group from carbamoyl phosphate (CP) to the N(epsilon) atom of ornithine (ORN) to produce L-citrulline. In Symbiobacterium thermophilum (strain DSM 24528 / JCM 14929 / IAM 14863 / T), this protein is Ornithine carbamoyltransferase.